The primary structure comprises 411 residues: Pyridinium-3,5-bisthiocarboxylic acid mononucleotide nickel insertion protein (411 aa).

This sequence belongs to the LarC family.

It catalyses the reaction Ni(II)-pyridinium-3,5-bisthiocarboxylate mononucleotide = pyridinium-3,5-bisthiocarboxylate mononucleotide + Ni(2+). Involved in the biosynthesis of a nickel-pincer cofactor ((SCS)Ni(II) pincer complex). Binds Ni(2+), and functions in nickel delivery to pyridinium-3,5-bisthiocarboxylic acid mononucleotide (P2TMN), to form the mature cofactor. Is thus probably required for the activation of nickel-pincer cofactor-dependent enzymes. The polypeptide is Pyridinium-3,5-bisthiocarboxylic acid mononucleotide nickel insertion protein (Geobacillus kaustophilus (strain HTA426)).